The following is a 129-amino-acid chain: Small ribosomal subunit protein uS11 (129 aa).

Belongs to the universal ribosomal protein uS11 family. In terms of assembly, part of the 30S ribosomal subunit. Interacts with proteins S7 and S18. Binds to IF-3.

Functionally, located on the platform of the 30S subunit, it bridges several disparate RNA helices of the 16S rRNA. Forms part of the Shine-Dalgarno cleft in the 70S ribosome. In Marinobacter nauticus (strain ATCC 700491 / DSM 11845 / VT8) (Marinobacter aquaeolei), this protein is Small ribosomal subunit protein uS11.